Reading from the N-terminus, the 236-residue chain is MAATFPGVCAVVPAAGFGRRMQTECPKQYLSIGNKTILEHAVAALLADARVQRVVIAVSPGDRRFSQLPLAQHPQITVVDGGAERADSVLAGLQALPEAQWVLVHDAARPCLHQDDLSRLLSLCETSRVGGILAAPVRDTMKRAEPGKTAIAHTVDRNDLWHALTPQFFPRELLVDCLTRALNEGATITDEASALEYCGFHPQLVAGRADNIKVTRPEDLALAEFYLTRSRHQEKA.

This sequence belongs to the IspD/TarI cytidylyltransferase family. IspD subfamily. As to quaternary structure, homodimer.

It catalyses the reaction 2-C-methyl-D-erythritol 4-phosphate + CTP + H(+) = 4-CDP-2-C-methyl-D-erythritol + diphosphate. The protein operates within isoprenoid biosynthesis; isopentenyl diphosphate biosynthesis via DXP pathway; isopentenyl diphosphate from 1-deoxy-D-xylulose 5-phosphate: step 2/6. Functionally, catalyzes the formation of 4-diphosphocytidyl-2-C-methyl-D-erythritol from CTP and 2-C-methyl-D-erythritol 4-phosphate (MEP). This chain is 2-C-methyl-D-erythritol 4-phosphate cytidylyltransferase, found in Klebsiella pneumoniae subsp. pneumoniae (strain ATCC 700721 / MGH 78578).